Here is a 363-residue protein sequence, read N- to C-terminus: NAD(P)H-quinone oxidoreductase subunit 1, chloroplastic (363 aa).

8 helical membrane passes run 30–50, 98–118, 127–147, 165–185, 203–223, 248–268, 300–320, and 336–356; these read LVPI…IVWL, FSIG…VIPF, LSIG…GLLM, AAQS…ISLL, FWGW…ISSL, YSGI…LVSS, VFGT…FLFI, and LLNL…LLTT.

Belongs to the complex I subunit 1 family. NDH is composed of at least 16 different subunits, 5 of which are encoded in the nucleus.

The protein localises to the plastid. Its subcellular location is the chloroplast thylakoid membrane. It carries out the reaction a plastoquinone + NADH + (n+1) H(+)(in) = a plastoquinol + NAD(+) + n H(+)(out). The enzyme catalyses a plastoquinone + NADPH + (n+1) H(+)(in) = a plastoquinol + NADP(+) + n H(+)(out). Its function is as follows. NDH shuttles electrons from NAD(P)H:plastoquinone, via FMN and iron-sulfur (Fe-S) centers, to quinones in the photosynthetic chain and possibly in a chloroplast respiratory chain. The immediate electron acceptor for the enzyme in this species is believed to be plastoquinone. Couples the redox reaction to proton translocation, and thus conserves the redox energy in a proton gradient. This Solanum bulbocastanum (Wild potato) protein is NAD(P)H-quinone oxidoreductase subunit 1, chloroplastic.